The chain runs to 66 residues: uncharacterized protein (66 aa).

A helical transmembrane segment spans residues 32-49 (WAFSLLIAGSAFLWIYMR).

The protein localises to the membrane. This is an uncharacterized protein from Bacillus subtilis (strain 168).